The following is a 589-amino-acid chain: V-type ATP synthase alpha chain (589 aa).

An ATP-binding site is contributed by 239–246; the sequence is GPFGAGKT.

It belongs to the ATPase alpha/beta chains family.

It catalyses the reaction ATP + H2O + 4 H(+)(in) = ADP + phosphate + 5 H(+)(out). Its function is as follows. Produces ATP from ADP in the presence of a proton gradient across the membrane. The V-type alpha chain is a catalytic subunit. In Treponema denticola (strain ATCC 35405 / DSM 14222 / CIP 103919 / JCM 8153 / KCTC 15104), this protein is V-type ATP synthase alpha chain.